The chain runs to 1480 residues: ABC transporter G family member 49 (1480 aa).

Polar residues predominate over residues 1 to 18 (MHTTTQATPQKSMVMTTT). 3 disordered regions span residues 1–42 (MHTT…AGSS), 60–81 (VSGELGGGGGGGGGGREKEDDE), and 104–124 (SSTRGGGSSGDVSEGGGGGAA). Composition is skewed to gly residues over residues 63-73 (ELGGGGGGGGG) and 107-123 (RGGGSSGDVSEGGGGGA). Residues 212 to 485 (LAAKLGFSHH…FESCGFKCPE (274 aa)) enclose the ABC transporter 1 domain. Position 245–252 (245–252 (GPPGCGKT)) interacts with ATP. The region spanning 563 to 775 (HLLKACFDRE…AEIGLTGNEF (213 aa)) is the ABC transmembrane type-2 1 domain. 6 helical membrane-spanning segments follow: residues 581–601 (FLHITKAVQLGLLAIITGTVF), 619–639 (SLFYALILLMVNGIPELVMSI), 656–676 (GWAYAIPAFILKIPASLVAAL), 699–719 (LLVLFLVHTGALSLYRCVGSY), 725–745 (VGPIAATMSLLVILLFGGFLI), and 811–831 (VAALIGFILLYNIGFAIGLTI). The ABC transporter 2 domain occupies 877–1129 (ISFQDVNYYV…KVIQYFQSIP (253 aa)). 922-929 (GVTGAGKT) provides a ligand contact to ATP. An ABC transmembrane type-2 2 domain is found at 1202–1418 (EQFKACLWKQ…TLNLLFTTQF (217 aa)). A run of 7 helical transmembrane segments spans residues 1226–1246 (IVFMAFSSIIFGVLYWQQGNI), 1254–1274 (GLFTILGCMYGITIFTGINNS), 1311–1331 (IPYVLMLALLFMLIAYPTIGY), 1340–1360 (WFFYTMFCTLLYFVYFGMLIV), 1368–1388 (VASIYASSFYMTQHLLSGFVM), 1396–1416 (WWIWLYYISPMSWTLNLLFTT), and 1449–1469 (LLPLSAIILAAYPVLFAILYG).

Belongs to the ABC transporter superfamily. ABCG family. PDR (TC 3.A.1.205) subfamily.

It is found in the membrane. Functionally, may be a general defense protein. The protein is ABC transporter G family member 49 of Oryza sativa subsp. japonica (Rice).